We begin with the raw amino-acid sequence, 713 residues long: Polyribonucleotide nucleotidyltransferase (713 aa).

Positions 498 and 504 each coordinate Mg(2+). Residues 565 to 631 (PRILSLKVPV…RIEDLTREAK (67 aa)) form the KH domain. The S1 motif domain maps to 633-701 (GEIYEGTVTR…ERGKIDLIRP (69 aa)).

Belongs to the polyribonucleotide nucleotidyltransferase family. It depends on Mg(2+) as a cofactor.

The protein localises to the cytoplasm. It carries out the reaction RNA(n+1) + phosphate = RNA(n) + a ribonucleoside 5'-diphosphate. Involved in mRNA degradation. Catalyzes the phosphorolysis of single-stranded polyribonucleotides processively in the 3'- to 5'-direction. The protein is Polyribonucleotide nucleotidyltransferase of Thermus thermophilus (strain ATCC 27634 / DSM 579 / HB8).